The following is a 337-amino-acid chain: Protein RETICULATA-RELATED 3, chloroplastic (337 aa).

The transit peptide at 1–59 (MAAMAAKLQLSAKSDQSSVRLPRVINLSRDPTTRVSFPRNGSVCSLHTNFSSPHLAKPC) directs the protein to the chloroplast. The span at 70–89 (NNGGGSGSGGGGGGFGGSGG) shows a compositional bias: gly residues. Positions 70–96 (NNGGGSGSGGGGGGFGGSGGEASEESS) are disordered. 2 helical membrane passes run 151–171 (FVFS…YMLA) and 216–236 (VFAS…NGLI).

This sequence belongs to the RETICULATA family. In terms of tissue distribution, expressed in root meristem, root vasculature, distal region of young leaf primordia, leaf bundle sheath cells, hydathodes and pollen grains.

The protein localises to the plastid. Its subcellular location is the chloroplast membrane. Its function is as follows. May play a role in leaf development. Required for leaf mesophyll cell division in the early stages of leaf organogenesis. This Arabidopsis thaliana (Mouse-ear cress) protein is Protein RETICULATA-RELATED 3, chloroplastic.